The following is a 1940-amino-acid chain: Protein ORF1940 (1940 aa).

4 TPR repeats span residues 119 to 153, 155 to 186, 480 to 513, and 617 to 652; these read IKAC…ALQY, FQSL…LQQI, RLPD…GLHG, and GKSM…SPTS. 2 disordered regions span residues 1160-1239 and 1519-1571; these read PSKV…PGAV and KGPS…TVTS. A compositionally biased stretch (low complexity) spans 1164–1185; the sequence is QNTTQPSATQNTTTQPTAQNTS. A compositionally biased stretch (polar residues) spans 1186-1200; the sequence is LPGATQNTTLPTPSK. 3 stretches are compositionally biased toward low complexity: residues 1201 to 1235, 1521 to 1539, and 1561 to 1571; these read VQNT…NTSL, PSTT…MTPP, and TPGSGSQTVTS. A TPR 5 repeat occupies 1691 to 1724; the sequence is KDLNKSVGTSVVEEAKYNSTLQTYLAGLGIKDLN. The interval 1862–1940 is disordered; that stretch reads TTTHHITPPP…AEQAEQVLLI (79 aa). Positions 1868–1883 are enriched in pro residues; the sequence is TPPPPPPPPPPPPPPK. Over residues 1884-1894 the composition is skewed to low complexity; the sequence is TQTITTTTQIT. A compositionally biased stretch (pro residues) spans 1895–1912; the sequence is PPSPPPTPPPPPPPPKSP.

In Acidianus convivator (ATV), this protein is Protein ORF1940.